The following is an 802-amino-acid chain: Lon protease (802 aa).

The 195-residue stretch at 21–215 (LPLLPVRDII…KIIQILNAEI (195 aa)) folds into the Lon N-terminal domain. 367-374 (GPPGVGKT) provides a ligand contact to ATP. In terms of domain architecture, Lon proteolytic spans 603–784 (ENDVGVATGL…DEVISLTIER (182 aa)). Active-site residues include S690 and K733.

It belongs to the peptidase S16 family. Homohexamer. Organized in a ring with a central cavity.

It localises to the cytoplasm. The catalysed reaction is Hydrolysis of proteins in presence of ATP.. In terms of biological role, ATP-dependent serine protease that mediates the selective degradation of mutant and abnormal proteins as well as certain short-lived regulatory proteins. Required for cellular homeostasis and for survival from DNA damage and developmental changes induced by stress. Degrades polypeptides processively to yield small peptide fragments that are 5 to 10 amino acids long. Binds to DNA in a double-stranded, site-specific manner. The chain is Lon protease from Endomicrobium trichonymphae.